We begin with the raw amino-acid sequence, 616 residues long: Chaperone protein HscA (616 aa).

Belongs to the heat shock protein 70 family.

Functionally, chaperone involved in the maturation of iron-sulfur cluster-containing proteins. Has a low intrinsic ATPase activity which is markedly stimulated by HscB. Involved in the maturation of IscU. This chain is Chaperone protein HscA, found in Enterobacter sp. (strain 638).